The following is a 325-amino-acid chain: TNFAIP3-interacting protein 3 (325 aa).

Disordered regions lie at residues 1–30 (MAHFVQGTSRMIAAESSTEHKECAEPSTRK) and 84–129 (RFLS…RLNE). Basic and acidic residues predominate over residues 17-28 (STEHKECAEPST). Residues 27 to 265 (STRKNLMNSL…LEKQLKQMYC (239 aa)) adopt a coiled-coil conformation. Residues 190–248 (HEEMRTEMEVLKQQVQIYEEDFKKERSDRERLNQEKEELQQINETSQSQLNRLNSQIKA) form a ubiquitin-binding domain (UBD) region.

In terms of assembly, interacts with TNFAIP3. Interacts with polyubiquitin. Highly expressed in lung, lymph node, thymus and fetal liver. Expressed at lower levels in bone marrow, brain, kidney, spleen, leukocytes and tonsils. Could be detected in heart, salivary gland, adrenal gland, pancreas, ovary and fetal brain. High levels detected in liver, colon, small intestine, muscle, stomach, testis, placenta, thyroid, uterus, prostate, skin and PBL.

Functionally, binds to zinc finger protein TNFAIP3 and inhibits NF-kappa-B activation induced by tumor necrosis factor, Toll-like receptor 4 (TLR4), interleukin-1 and 12-O-tetradecanoylphorbol-13-acetate. Overexpression inhibits NF-kappa-B-dependent gene expression in response to lipopolysaccharide at a level downstream of TRAF6 and upstream of IKBKB. NF-kappa-B inhibition is independent of TNFAIP3 binding. The protein is TNFAIP3-interacting protein 3 of Homo sapiens (Human).